Here is a 176-residue protein sequence, read N- to C-terminus: Disulfide bond formation protein B (176 aa).

Residues 1–14 (MLRFLNRCSRGRGA) lie on the Cytoplasmic side of the membrane. Residues 15 to 31 (WLLLAFTALALELTALY) traverse the membrane as a helical segment. Residues 32–49 (FQHVMLLKPCVLCIYQRS) are Periplasmic-facing. A disulfide bridge links C41 with C44. The chain crosses the membrane as a helical span at residues 50–65 (ALWGVFAAGIVGAIAP). The Cytoplasmic portion of the chain corresponds to 66–71 (SSLLRY). A helical membrane pass occupies residues 72-89 (PAIALWIYSSYEGIRLAW). Over 90-144 (KHTDILLNPSPFTTCDFFVSFPSWLPLDKWLPAIFNATGDCSERQWSFLSMEMPQ) the chain is Periplasmic. C104 and C130 form a disulfide bridge. The chain crosses the membrane as a helical span at residues 145–163 (WLLGIFAAYLLIAVLVLIA). Topologically, residues 164 to 176 (QPFRSKRRDLFSR) are cytoplasmic.

This sequence belongs to the DsbB family.

The protein resides in the cell inner membrane. Its function is as follows. Required for disulfide bond formation in some periplasmic proteins. Acts by oxidizing the DsbA protein. This Pectobacterium atrosepticum (strain SCRI 1043 / ATCC BAA-672) (Erwinia carotovora subsp. atroseptica) protein is Disulfide bond formation protein B.